The chain runs to 97 residues: Protein RnfH (97 aa).

The protein belongs to the UPF0125 (RnfH) family.

This is Protein RnfH from Proteus mirabilis (strain HI4320).